A 213-amino-acid chain; its full sequence is Thymidylate kinase (213 aa).

An ATP-binding site is contributed by 10 to 17 (GLEGAGKT).

The protein belongs to the thymidylate kinase family.

It carries out the reaction dTMP + ATP = dTDP + ADP. Phosphorylation of dTMP to form dTDP in both de novo and salvage pathways of dTTP synthesis. The protein is Thymidylate kinase of Enterobacter sp. (strain 638).